A 221-amino-acid polypeptide reads, in one-letter code: MKRHKEKKYNYTYVITNLVNNKIYYGTHSTDDLNDGYMGSGTLLAQAKKKYGKKNFNLSILGFYKDFKSARDAERELVTIDVVNDPMTYNLKIGGEGGRRIGYRVSSETKEKISKAQKGKPKHLGFSDVCRKAQLGKKQSEETKAKRKEALLNNPYGYNRNKPSHKRDPIMWDNIEKIKEIWENSGKSGAIKLKKLAIEAGFPNKSYARMLEVFRGTRTLL.

The GIY-YIG domain maps to 8 to 91 (KYNYTYVITN…VVNDPMTYNL (84 aa)). Residues 137-164 (KKQSEETKAKRKEALLNNPYGYNRNKPS) are disordered. A compositionally biased stretch (basic and acidic residues) spans 138–150 (KQSEETKAKRKEA).

It to endonucleases of group I introns of fungi and phage. Mg(2+) serves as cofactor.

Probably involved in the movement of the endonuclease-encoding DNA. The sequence is that of Endonuclease segA (segA) from Escherichia coli (Bacteriophage T4).